The primary structure comprises 595 residues: Leiomodin-1 (595 aa).

Disordered stretches follow at residues M1–N322 and D467–N568. S12 carries the post-translational modification Phosphoserine. The span at E27 to D40 shows a compositional bias: acidic residues. Composition is skewed to basic and acidic residues over residues C72–G105, Q117–K127, F134–G193, S201–A224, R232–V251, R259–Q289, D467–E476, and S484–V493. A Phosphoserine modification is found at S85. S135 carries the phosphoserine modification. Tandem repeats lie at residues A165 to R180, A181 to R196, N197 to K212, E213 to R227, S228 to E243, D244 to G257, S258 to T273, and Q274 to K288. The tract at residues A165–K288 is 8 X approximate tandem repeats. Pro residues-rich tracts occupy residues S503 to K513 and A527 to P538. A 5 X 4 AA approximate tandem repeats region spans residues S503–K522. Phosphoserine is present on S550. A WH2 domain is found at S569–V588.

As to expression, detected in smooth muscle, in stomach and uterus, blood vessel wall, and in slow fibers in extraocular muscle, urinary bladder and sternothyroid muscle (at protein level).

Its subcellular location is the cytoplasm. It is found in the myofibril. It localises to the sarcomere. The protein localises to the cytoskeleton. In terms of biological role, required for proper contractility of visceral smooth muscle cells. Mediates nucleation of actin filaments. This is Leiomodin-1 from Rattus norvegicus (Rat).